Reading from the N-terminus, the 435-residue chain is Actin-like protein 7A (435 aa).

Disordered regions lie at residues 1–20 (MWAP…VGNQ) and 29–65 (QTAS…ERPK). The segment at 31 to 51 (ASLRDGPAKRAVWVRRRSSEP) is required for interaction with TES. The segment covering 47–65 (RSSEPQEPTESKAAKERPK) has biased composition (basic and acidic residues).

This sequence belongs to the actin family. Interacts (via N-terminus) with TES (via LIM domain 2). Heterodimer with TES; the heterodimer interacts with ENAH to form a heterotrimer. Interacts with ACTL9. Interacts with CYLC1; the interaction may be relevant for proper acrosome attachment to the nuclear envelope.

It is found in the cytoplasm. Its subcellular location is the cytoskeleton. It localises to the golgi apparatus. The protein resides in the nucleus. Essential for normal spermatogenesis and male fertility. Required for normal sperm head morphology, acroplaxome formation, acrosome attachment, and acrosome granule stability. May anchor and stabilize acrosomal adherence to the acroplaxome at least in part by facilitating the presence of F-actin in the subacrosomal space. May play an important role in formation and fusion of Golgi-derived vesicles during acrosome biogenesis. The chain is Actin-like protein 7A (ACTL7A) from Macaca fascicularis (Crab-eating macaque).